The chain runs to 66 residues: Large ribosomal subunit protein uL29 (66 aa).

It belongs to the universal ribosomal protein uL29 family.

This is Large ribosomal subunit protein uL29 from Rhizobium johnstonii (strain DSM 114642 / LMG 32736 / 3841) (Rhizobium leguminosarum bv. viciae).